A 534-amino-acid chain; its full sequence is CTP synthase (534 aa).

An amidoligase domain region spans residues 1–267; sequence MTKYIFVTGG…DQIVCDHLKL (267 aa). A CTP-binding site is contributed by S13. S13 contacts UTP. Position 14-19 (14-19) interacts with ATP; the sequence is SIGKGI. L-glutamine is bound at residue Y54. D71 serves as a coordination point for ATP. Mg(2+) contacts are provided by D71 and E141. Residues 148-150, 188-193, and K224 contribute to the CTP site; these read DIE and KTKPTQ. UTP contacts are provided by residues 188–193 and K224; that span reads KTKPTQ. ATP is bound at residue 240–242; it reads RDV. Residues 292–534 enclose the Glutamine amidotransferase type-1 domain; sequence KIALVGKYVE…FVTAAIKNSN (243 aa). An L-glutamine-binding site is contributed by G354. Catalysis depends on C381, which acts as the Nucleophile; for glutamine hydrolysis. L-glutamine contacts are provided by residues 382–385, E405, and R463; that span reads LGMQ. Active-site residues include H508 and E510.

Belongs to the CTP synthase family. Homotetramer.

It carries out the reaction UTP + L-glutamine + ATP + H2O = CTP + L-glutamate + ADP + phosphate + 2 H(+). The enzyme catalyses L-glutamine + H2O = L-glutamate + NH4(+). It catalyses the reaction UTP + NH4(+) + ATP = CTP + ADP + phosphate + 2 H(+). It participates in pyrimidine metabolism; CTP biosynthesis via de novo pathway; CTP from UDP: step 2/2. Its activity is regulated as follows. Allosterically activated by GTP, when glutamine is the substrate; GTP has no effect on the reaction when ammonia is the substrate. The allosteric effector GTP functions by stabilizing the protein conformation that binds the tetrahedral intermediate(s) formed during glutamine hydrolysis. Inhibited by the product CTP, via allosteric rather than competitive inhibition. Catalyzes the ATP-dependent amination of UTP to CTP with either L-glutamine or ammonia as the source of nitrogen. Regulates intracellular CTP levels through interactions with the four ribonucleotide triphosphates. The protein is CTP synthase of Streptococcus pyogenes serotype M18 (strain MGAS8232).